Reading from the N-terminus, the 342-residue chain is Dihydroorotate dehydrogenase (quinone) (342 aa).

Residues 61-65 (AGLDK) and Thr85 each bind FMN. Residue Lys65 coordinates substrate. 110–114 (NRMGF) serves as a coordination point for substrate. 2 residues coordinate FMN: Asn138 and Asn171. Asn171 serves as a coordination point for substrate. Ser174 serves as the catalytic Nucleophile. Asn176 contributes to the substrate binding site. FMN-binding residues include Lys216 and Thr244. Position 245-246 (245-246 (NT)) interacts with substrate. FMN is bound by residues Gly267, Gly296, and 317 to 318 (YS).

Belongs to the dihydroorotate dehydrogenase family. Type 2 subfamily. As to quaternary structure, monomer. The cofactor is FMN.

It localises to the cell membrane. The catalysed reaction is (S)-dihydroorotate + a quinone = orotate + a quinol. It functions in the pathway pyrimidine metabolism; UMP biosynthesis via de novo pathway; orotate from (S)-dihydroorotate (quinone route): step 1/1. Its function is as follows. Catalyzes the conversion of dihydroorotate to orotate with quinone as electron acceptor. The polypeptide is Dihydroorotate dehydrogenase (quinone) (Pseudomonas paraeruginosa (strain DSM 24068 / PA7) (Pseudomonas aeruginosa (strain PA7))).